The chain runs to 346 residues: Holliday junction branch migration complex subunit RuvB (346 aa).

Residues 4-185 (SDRIITASPF…FGIVSRLEFY (182 aa)) form a large ATPase domain (RuvB-L) region. ATP is bound by residues leucine 24, arginine 25, glycine 66, lysine 69, threonine 70, threonine 71, 132–134 (EDY), arginine 175, tyrosine 185, and arginine 222. Threonine 70 lines the Mg(2+) pocket. The tract at residues 186-256 (TADELGKIVT…VADAALQMLD (71 aa)) is small ATPAse domain (RuvB-S). The tract at residues 259–346 (ATGLDVLDRK…TTVPSLFDPD (88 aa)) is head domain (RuvB-H). DNA contacts are provided by arginine 295, arginine 314, and arginine 319.

The protein belongs to the RuvB family. As to quaternary structure, homohexamer. Forms an RuvA(8)-RuvB(12)-Holliday junction (HJ) complex. HJ DNA is sandwiched between 2 RuvA tetramers; dsDNA enters through RuvA and exits via RuvB. An RuvB hexamer assembles on each DNA strand where it exits the tetramer. Each RuvB hexamer is contacted by two RuvA subunits (via domain III) on 2 adjacent RuvB subunits; this complex drives branch migration. In the full resolvosome a probable DNA-RuvA(4)-RuvB(12)-RuvC(2) complex forms which resolves the HJ.

It localises to the cytoplasm. The enzyme catalyses ATP + H2O = ADP + phosphate + H(+). Its function is as follows. The RuvA-RuvB-RuvC complex processes Holliday junction (HJ) DNA during genetic recombination and DNA repair, while the RuvA-RuvB complex plays an important role in the rescue of blocked DNA replication forks via replication fork reversal (RFR). RuvA specifically binds to HJ cruciform DNA, conferring on it an open structure. The RuvB hexamer acts as an ATP-dependent pump, pulling dsDNA into and through the RuvAB complex. RuvB forms 2 homohexamers on either side of HJ DNA bound by 1 or 2 RuvA tetramers; 4 subunits per hexamer contact DNA at a time. Coordinated motions by a converter formed by DNA-disengaged RuvB subunits stimulates ATP hydrolysis and nucleotide exchange. Immobilization of the converter enables RuvB to convert the ATP-contained energy into a lever motion, pulling 2 nucleotides of DNA out of the RuvA tetramer per ATP hydrolyzed, thus driving DNA branch migration. The RuvB motors rotate together with the DNA substrate, which together with the progressing nucleotide cycle form the mechanistic basis for DNA recombination by continuous HJ branch migration. Branch migration allows RuvC to scan DNA until it finds its consensus sequence, where it cleaves and resolves cruciform DNA. The sequence is that of Holliday junction branch migration complex subunit RuvB from Nitrosomonas europaea (strain ATCC 19718 / CIP 103999 / KCTC 2705 / NBRC 14298).